Here is a 522-residue protein sequence, read N- to C-terminus: Sorting nexin-1 (522 aa).

Residues 1–144 (MASGGGGCSA…EEEEQEDQFD (144 aa)) are disordered. A phosphoserine mark is found at S32 and S39. Over residues 35 to 45 (EAGDSDTEGED) the composition is skewed to acidic residues. T41 and T48 each carry phosphothreonine. Positions 55 to 65 (KPQSPKKTTSL) are enriched in polar residues. Phosphoserine occurs at positions 58 and 72. The segment covering 71–80 (GSKENGIHED) has biased composition (basic and acidic residues). Positions 98 to 125 (LDSTQNNQKTMPGKTLTSHSPQEATNSP) are enriched in polar residues. Residues 132 to 143 (EELEEEEQEDQF) are compositionally biased toward acidic residues. The region spanning 143–272 (FDLTVGITDP…EFLEKEELPR (130 aa)) is the PX domain. A 1,2-diacyl-sn-glycero-3-phospho-(1D-myo-inositol-3-phosphate) is bound by residues R186, S188, and K214. S188 carries the phosphoserine modification. K237 is subject to N6-acetyllysine. Residue R238 participates in a 1,2-diacyl-sn-glycero-3-phospho-(1D-myo-inositol-3-phosphate) binding. S280 is subject to Phosphoserine. Positions 281 to 298 (GAGLLKMFNKATDAVSKM) are membrane-binding amphipathic helix. Residues 302 to 522 (MNESDIWFEE…AFLPEAKAIS (221 aa)) form the BAR domain.

Belongs to the sorting nexin family. As to quaternary structure, predominantly forms heterodimers with BAR domain-containing sorting nexins SNX5, SNX6 and SNX32. Can self-associate to form homodimers. The heterodimers are proposed to self-assemble into helical arrays on the membrane to stabilize and expand local membrane curvature underlying endosomal tubule formation. Thought to be a component of the originally described retromer complex (also called SNX-BAR retromer) which is a pentamer containing the heterotrimeric retromer cargo-selective complex (CSC), also described as vacuolar protein sorting subcomplex (VPS) and a heterodimeric membrane-deforming subcomplex formed between SNX1 or SNX2 and SNX5 or SNX6 (also called SNX-BAR subcomplex); the respective CSC and SNX-BAR subcomplexes associate with low affinity. Interacts with SNX5, SNX6, SNX32, VPS26A, VPS29, VPS35, DRD5, DENND5A, KALRN, RHOG (GDP-bound form). The interaction with SNX2 is reported controversially. Interacts with DNAJC13; prevented by presence of HGS. Interacts with HGS.

It is found in the endosome membrane. The protein resides in the golgi apparatus. Its subcellular location is the trans-Golgi network membrane. It localises to the early endosome membrane. The protein localises to the cell projection. It is found in the lamellipodium. Functionally, involved in several stages of intracellular trafficking. Interacts with membranes containing phosphatidylinositol 3-phosphate (PtdIns(3P)) or phosphatidylinositol 3,5-bisphosphate (PtdIns(3,5)P2). Acts in part as component of the retromer membrane-deforming SNX-BAR subcomplex. The SNX-BAR retromer mediates retrograde transport of cargo proteins from endosomes to the trans-Golgi network (TGN) and is involved in endosome-to-plasma membrane transport for cargo protein recycling. The SNX-BAR subcomplex functions to deform the donor membrane into a tubular profile called endosome-to-TGN transport carrier (ETC). Can sense membrane curvature and has in vitro vesicle-to-membrane remodeling activity. Involved in retrograde endosome-to-TGN transport of lysosomal enzyme receptors (IGF2R, M6PR and SORT1). Plays a role in targeting ligand-activated EGFR to the lysosomes for degradation after endocytosis from the cell surface and release from the Golgi. Involvement in retromer-independent endocytic trafficking of P2RY1 and lysosomal degradation of protease-activated receptor-1/F2R. Promotes KALRN- and RHOG-dependent but retromer-independent membrane remodeling such as lamellipodium formation; the function is dependent on GEF activity of KALRN. Required for endocytosis of DRD5 upon agonist stimulation but not for basal receptor trafficking. This chain is Sorting nexin-1 (Snx1), found in Mus musculus (Mouse).